Here is a 210-residue protein sequence, read N- to C-terminus: Large ribosomal subunit protein uL4 (210 aa).

Polar residues predominate over residues 41–51; it reads ANARQGTQSTK. Disordered regions lie at residues 41-60 and 67-98; these read ANARQGTQSTKTRGEVQGSS and KGTGNARMGTNRSPVRRHGGVAFGPRPRDFSK.

It belongs to the universal ribosomal protein uL4 family. In terms of assembly, part of the 50S ribosomal subunit.

Functionally, one of the primary rRNA binding proteins, this protein initially binds near the 5'-end of the 23S rRNA. It is important during the early stages of 50S assembly. It makes multiple contacts with different domains of the 23S rRNA in the assembled 50S subunit and ribosome. Its function is as follows. Forms part of the polypeptide exit tunnel. This is Large ribosomal subunit protein uL4 from Dehalococcoides mccartyi (strain ATCC BAA-2266 / KCTC 15142 / 195) (Dehalococcoides ethenogenes (strain 195)).